An 815-amino-acid polypeptide reads, in one-letter code: Probable beta-glucosidase G (815 aa).

The signal sequence occupies residues 1 to 20; it reads MASIAHLVVSGLLAATAVNG. N-linked (GlcNAc...) asparagine glycans are attached at residues Asn40, Asn58, Asn229, and Asn276. The active site involves Asp304. N-linked (GlcNAc...) asparagine glycosylation is found at Asn343, Asn350, Asn402, Asn507, Asn563, Asn584, Asn623, Asn662, and Asn715.

Belongs to the glycosyl hydrolase 3 family.

It is found in the secreted. It catalyses the reaction Hydrolysis of terminal, non-reducing beta-D-glucosyl residues with release of beta-D-glucose.. It participates in glycan metabolism; cellulose degradation. In terms of biological role, beta-glucosidases are one of a number of cellulolytic enzymes involved in the degradation of cellulosic biomass. Catalyzes the last step releasing glucose from the inhibitory cellobiose. This chain is Probable beta-glucosidase G (bglG), found in Aspergillus flavus (strain ATCC 200026 / FGSC A1120 / IAM 13836 / NRRL 3357 / JCM 12722 / SRRC 167).